A 594-amino-acid chain; its full sequence is U3 small nucleolar RNA-associated protein 18 (594 aa).

Disordered stretches follow at residues 48 to 128 (EQEM…WIDS) and 176 to 200 (KWVDDESDSELDDEEDDEEEGSNNV). Acidic residues-rich tracts occupy residues 49-72 (QEMDVEDQEDEGSESDNSEEDEAQ), 102-128 (TMDVDDEDDSSSDDYSEDSEEAAWIDS), and 180-196 (DESDSELDDEEDDEEEG). An interaction with UTP21 region spans residues 101–190 (DTMDVDDEDD…ESDSELDDEE (90 aa)). Serine 182 and serine 184 each carry phosphoserine. 5 WD repeats span residues 246-285 (PSHSAIQSLSFHPSKPLLLTGGYDKTLRIYHIDGKTNHLV), 290-334 (LVGS…LTHS), 463-504 (GTTT…TSST), 513-554 (QLTT…VFSN), and 560-593 (TPLGKVTSVAFSPSGGLLAVGNEQGKVRLWKLNH).

This sequence belongs to the WD repeat UTP18 family. As to quaternary structure, interacts with snoRNA U3. Interacts with MPP10, UTP21 and UTP25. Component of the ribosomal small subunit (SSU) processome composed of at least 40 protein subunits and snoRNA U3.

The protein resides in the nucleus. It localises to the nucleolus. Functionally, involved in nucleolar processing of pre-18S ribosomal RNA and ribosome assembly. In Saccharomyces cerevisiae (strain ATCC 204508 / S288c) (Baker's yeast), this protein is U3 small nucleolar RNA-associated protein 18 (UTP18).